The chain runs to 201 residues: Adenylyl-sulfate kinase (201 aa).

35–42 lines the ATP pocket; sequence GLSGSGKS. Ser-109 serves as the catalytic Phosphoserine intermediate.

The protein belongs to the APS kinase family.

The catalysed reaction is adenosine 5'-phosphosulfate + ATP = 3'-phosphoadenylyl sulfate + ADP + H(+). Its pathway is sulfur metabolism; hydrogen sulfide biosynthesis; sulfite from sulfate: step 2/3. In terms of biological role, catalyzes the synthesis of activated sulfate. This Shigella boydii serotype 18 (strain CDC 3083-94 / BS512) protein is Adenylyl-sulfate kinase.